A 230-amino-acid chain; its full sequence is Cytochrome c oxidase subunit 2 (230 aa).

Residues 1 to 14 are Mitochondrial intermembrane-facing; that stretch reads MAHPTQLGFKDAAM. Residues 15-45 traverse the membrane as a helical segment; it reads PVMEELLHFHDHALMIVLLISTLVLYIITAM. Residues 46-59 lie on the Mitochondrial matrix side of the membrane; sequence VSTKLTNKYILDSQ. The helical transmembrane segment at 60-87 threads the bilayer; it reads EIEIVWTILPAVILVLIALPSLRILYLM. At 88 to 230 the chain is on the mitochondrial intermembrane side; that stretch reads DEINDPHLTI…NWSSLMLEDA (143 aa). Cu cation is bound by residues histidine 161, cysteine 196, glutamate 198, cysteine 200, histidine 204, and methionine 207. Position 198 (glutamate 198) interacts with Mg(2+).

The protein belongs to the cytochrome c oxidase subunit 2 family. In terms of assembly, component of the cytochrome c oxidase (complex IV, CIV), a multisubunit enzyme composed of 14 subunits. The complex is composed of a catalytic core of 3 subunits MT-CO1, MT-CO2 and MT-CO3, encoded in the mitochondrial DNA, and 11 supernumerary subunits COX4I, COX5A, COX5B, COX6A, COX6B, COX6C, COX7A, COX7B, COX7C, COX8 and NDUFA4, which are encoded in the nuclear genome. The complex exists as a monomer or a dimer and forms supercomplexes (SCs) in the inner mitochondrial membrane with NADH-ubiquinone oxidoreductase (complex I, CI) and ubiquinol-cytochrome c oxidoreductase (cytochrome b-c1 complex, complex III, CIII), resulting in different assemblies (supercomplex SCI(1)III(2)IV(1) and megacomplex MCI(2)III(2)IV(2)). Found in a complex with TMEM177, COA6, COX18, COX20, SCO1 and SCO2. Interacts with TMEM177 in a COX20-dependent manner. Interacts with COX20. Interacts with COX16. Cu cation serves as cofactor.

It localises to the mitochondrion inner membrane. The catalysed reaction is 4 Fe(II)-[cytochrome c] + O2 + 8 H(+)(in) = 4 Fe(III)-[cytochrome c] + 2 H2O + 4 H(+)(out). In terms of biological role, component of the cytochrome c oxidase, the last enzyme in the mitochondrial electron transport chain which drives oxidative phosphorylation. The respiratory chain contains 3 multisubunit complexes succinate dehydrogenase (complex II, CII), ubiquinol-cytochrome c oxidoreductase (cytochrome b-c1 complex, complex III, CIII) and cytochrome c oxidase (complex IV, CIV), that cooperate to transfer electrons derived from NADH and succinate to molecular oxygen, creating an electrochemical gradient over the inner membrane that drives transmembrane transport and the ATP synthase. Cytochrome c oxidase is the component of the respiratory chain that catalyzes the reduction of oxygen to water. Electrons originating from reduced cytochrome c in the intermembrane space (IMS) are transferred via the dinuclear copper A center (CU(A)) of subunit 2 and heme A of subunit 1 to the active site in subunit 1, a binuclear center (BNC) formed by heme A3 and copper B (CU(B)). The BNC reduces molecular oxygen to 2 water molecules using 4 electrons from cytochrome c in the IMS and 4 protons from the mitochondrial matrix. The polypeptide is Cytochrome c oxidase subunit 2 (mt-co2) (Cyprinus carpio (Common carp)).